The sequence spans 647 residues: uncharacterized protein (647 aa).

5 helical membrane passes run 14–38 (LFPI…LAVW), 61–78 (VVAL…TTLF), 90–110 (LWLT…PAFI), 140–158 (LSAV…VIYW), and 178–195 (VIAL…RSSF).

The protein resides in the cell membrane. This is an uncharacterized protein from Haemophilus influenzae (strain ATCC 51907 / DSM 11121 / KW20 / Rd).